Consider the following 166-residue polypeptide: Transcriptional repressor NrdR (166 aa).

Residues 3–34 fold into a zinc finger; that stretch reads CPFCRNPDSRVVDSRMADDGSSIRRRRQCPEC. The 91-residue stretch at 46 to 136 folds into the ATP-cone domain; that stretch reads LSVIKRSGVG…VYQAFESLED (91 aa).

The protein belongs to the NrdR family. Zn(2+) is required as a cofactor.

Functionally, negatively regulates transcription of bacterial ribonucleotide reductase nrd genes and operons by binding to NrdR-boxes. This chain is Transcriptional repressor NrdR, found in Paenarthrobacter aurescens (strain TC1).